The primary structure comprises 197 residues: Putative rho GDP-dissociation inhibitor 1 (197 aa).

This sequence belongs to the Rho GDI family. In terms of assembly, interacts with rac1A, rac1B, rac1C, racB, raCC and RacE.

It is found in the cytoplasm. Its function is as follows. Regulates the GDP/GTP exchange reaction of the Rho proteins by inhibiting the dissociation of GDP from them, and the subsequent binding of GTP to them. Regulates the Rac-dependent signaling pathways controlling cytokinesis, actin reorganization and the contractile vacuole. Required for efficient accumulation of cap at the cell cortex. This Dictyostelium discoideum (Social amoeba) protein is Putative rho GDP-dissociation inhibitor 1 (rdiA).